The sequence spans 157 residues: S-ribosylhomocysteine lyase (157 aa).

Positions 54, 58, and 126 each coordinate Fe cation.

The protein belongs to the LuxS family. Homodimer. Fe cation serves as cofactor.

It catalyses the reaction S-(5-deoxy-D-ribos-5-yl)-L-homocysteine = (S)-4,5-dihydroxypentane-2,3-dione + L-homocysteine. Functionally, involved in the synthesis of autoinducer 2 (AI-2) which is secreted by bacteria and is used to communicate both the cell density and the metabolic potential of the environment. The regulation of gene expression in response to changes in cell density is called quorum sensing. Catalyzes the transformation of S-ribosylhomocysteine (RHC) to homocysteine (HC) and 4,5-dihydroxy-2,3-pentadione (DPD). This is S-ribosylhomocysteine lyase from Bacillus pumilus (strain SAFR-032).